The chain runs to 130 residues: Protein ApaG (130 aa).

An ApaG domain is found at 3-127 (SAMTRSINIL…FSLDSPHAKR (125 aa)).

This Parvibaculum lavamentivorans (strain DS-1 / DSM 13023 / NCIMB 13966) protein is Protein ApaG.